Reading from the N-terminus, the 317-residue chain is Malate dehydrogenase (317 aa).

NAD(+) contacts are provided by residues 13-18 (GAGNIG) and Asp-38. Residues Arg-87 and Arg-93 each contribute to the substrate site. Residues Asn-100 and 123–125 (VTN) each bind NAD(+). Substrate is bound by residues Asn-125 and Arg-156. The Proton acceptor role is filled by His-180.

Belongs to the LDH/MDH superfamily. MDH type 3 family.

The catalysed reaction is (S)-malate + NAD(+) = oxaloacetate + NADH + H(+). Functionally, catalyzes the reversible oxidation of malate to oxaloacetate. The polypeptide is Malate dehydrogenase (Anaplasma marginale (strain St. Maries)).